A 305-amino-acid chain; its full sequence is UDP-N-acetylenolpyruvoylglucosamine reductase (305 aa).

An FAD-binding PCMH-type domain is found at valine 35–histidine 214. Arginine 179 is an active-site residue. Serine 228 functions as the Proton donor in the catalytic mechanism. Glutamate 298 is an active-site residue.

This sequence belongs to the MurB family. The cofactor is FAD.

Its subcellular location is the cytoplasm. The catalysed reaction is UDP-N-acetyl-alpha-D-muramate + NADP(+) = UDP-N-acetyl-3-O-(1-carboxyvinyl)-alpha-D-glucosamine + NADPH + H(+). It functions in the pathway cell wall biogenesis; peptidoglycan biosynthesis. Cell wall formation. This chain is UDP-N-acetylenolpyruvoylglucosamine reductase, found in Nitrobacter winogradskyi (strain ATCC 25391 / DSM 10237 / CIP 104748 / NCIMB 11846 / Nb-255).